The chain runs to 398 residues: uncharacterized protein (398 aa).

2 helical membrane-spanning segments follow: residues 31–51 (VVFS…CLLF) and 56–76 (AFIT…FFGC).

It belongs to the chlamydial CPn_0129/CT_036/TC_0306 family.

Its subcellular location is the cell membrane. This is an uncharacterized protein from Chlamydia muridarum (strain MoPn / Nigg).